The sequence spans 129 residues: RutC family protein PM1466 (129 aa).

Belongs to the RutC family.

This Pasteurella multocida (strain Pm70) protein is RutC family protein PM1466.